The primary structure comprises 450 residues: UDP-N-acetylmuramoylalanine--D-glutamate ligase (450 aa).

119–125 (GSNGKTT) is an ATP binding site.

The protein belongs to the MurCDEF family.

The protein resides in the cytoplasm. It catalyses the reaction UDP-N-acetyl-alpha-D-muramoyl-L-alanine + D-glutamate + ATP = UDP-N-acetyl-alpha-D-muramoyl-L-alanyl-D-glutamate + ADP + phosphate + H(+). Its pathway is cell wall biogenesis; peptidoglycan biosynthesis. Cell wall formation. Catalyzes the addition of glutamate to the nucleotide precursor UDP-N-acetylmuramoyl-L-alanine (UMA). In Streptococcus pneumoniae (strain P1031), this protein is UDP-N-acetylmuramoylalanine--D-glutamate ligase.